Consider the following 462-residue polypeptide: Metal cation symporter ZIP8 (462 aa).

A signal peptide spans Met-1–Gly-19. Residues His-20–Gly-132 lie on the Extracellular side of the membrane. 3 N-linked (GlcNAc...) asparagine glycosylation sites follow: Asn-40, Asn-88, and Asn-96. The helical transmembrane segment at Phe-133–Ile-153 threads the bilayer. Residues Lys-154–Lys-160 are Cytoplasmic-facing. The chain crosses the membrane as a helical span at residues Ile-161–Leu-181. The Extracellular segment spans residues Ile-182–Lys-191. The helical transmembrane segment at Ile-192 to Val-212 threads the bilayer. Over Glu-213 to Ala-367 the chain is Cytoplasmic. The XEXPHE-motif signature appears at Glu-345 to Glu-350. A helical membrane pass occupies residues Leu-368–Val-388. The Extracellular segment spans residues Gly-389–Asn-390. Residues Asn-391 to Ala-411 form a helical membrane-spanning segment. The Cytoplasmic segment spans residues Asp-412 to Asp-431. Residues Phe-432–Ile-452 form a helical membrane-spanning segment. Over Thr-453 to Gln-462 the chain is Extracellular.

Belongs to the ZIP transporter (TC 2.A.5) family. Homodimer. In terms of processing, N-glycosylated. N-glycosylation is not required for proper iron and zinc transport. As to expression, ubiquitously expressed.

It is found in the cell membrane. The protein localises to the apical cell membrane. Its subcellular location is the basolateral cell membrane. The protein resides in the lysosome membrane. It catalyses the reaction Zn(2+)(out) + 2 hydrogencarbonate(out) = Zn(2+)(in) + 2 hydrogencarbonate(in). The catalysed reaction is selenite(out) + Zn(2+)(out) + hydrogencarbonate(out) = selenite(in) + Zn(2+)(in) + hydrogencarbonate(in). It carries out the reaction Mn(2+)(out) + 2 hydrogencarbonate(out) = Mn(2+)(in) + 2 hydrogencarbonate(in). The enzyme catalyses Cd(2+)(out) + 2 hydrogencarbonate(out) = Cd(2+)(in) + 2 hydrogencarbonate(in). It catalyses the reaction Fe(2+)(out) + 2 hydrogencarbonate(out) = Fe(2+)(in) + 2 hydrogencarbonate(in). The catalysed reaction is Co(2+)(out) + 2 hydrogencarbonate(out) = Co(2+)(in) + 2 hydrogencarbonate(in). Functionally, electroneutral divalent metal cation:bicarbonate symporter of the plasma membrane mediating the cellular uptake of zinc and manganese, two divalent metal cations important for development, tissue homeostasis and immunity. Transports an electroneutral complex composed of a divalent metal cation and two bicarbonate anions or alternatively a bicarbonate and a selenite anion. Thereby, it also contributes to the cellular uptake of selenium, an essential trace metal and micronutrient. Also imports cadmium a non-essential metal which is cytotoxic and carcinogenic. May also transport iron and cobalt through membranes. Through zinc import, indirectly regulates the metal-dependent transcription factor MTF1 and the expression of some metalloproteases involved in cartilage catabolism and also probably heart development. Also indirectly regulates the expression of proteins involved in cell morphology and cytoskeleton organization. Indirectly controls innate immune function and inflammatory response by regulating zinc cellular uptake which in turn modulates the expression of genes specific of these processes. Protects, for instance, cells from injury and death at the onset of inflammation. By regulating zinc influx into monocytes also directly modulates their adhesion to endothelial cells and arteries. Reclaims manganese from the bile at the apical membrane of hepatocytes, thereby regulating the activity of the manganese-dependent enzymes through the systemic levels of the nutrient. Also participates in manganese reabsorption in the proximal tubule of the kidney. By mediating the extracellular uptake of manganese by cells of the blood-brain barrier, may also play a role in the transport of the micronutrient to the brain. With manganese cellular uptake also participates in mitochondrial proper function. Finally, also probably functions intracellularly, translocating zinc from lysosome to cytosol to indirectly enhance the expression of specific genes during TCR-mediated T cell activation. This chain is Metal cation symporter ZIP8, found in Mus musculus (Mouse).